Here is a 504-residue protein sequence, read N- to C-terminus: Probable cytochrome P450 6a21 (504 aa).

C449 is a heme binding site.

The protein belongs to the cytochrome P450 family. Heme is required as a cofactor.

The protein localises to the endoplasmic reticulum membrane. It localises to the microsome membrane. May be involved in the metabolism of insect hormones and in the breakdown of synthetic insecticides. This is Probable cytochrome P450 6a21 (Cyp6a21) from Drosophila melanogaster (Fruit fly).